Consider the following 254-residue polypeptide: MPESTPFAAPGPELWSRLGWTPDAGQREQLITLQELLRDWNTRVNLTRLVEGEDFWVTQVLDSLWPLKPELDTADTPRRCIDVGTGGGFPGLAVAIALPGAELTLVDSVSRKTAAVAAMARSLGMADRVSVRTERVERTGQDPRCRGQFDLALARAVASAPVVAEYLVPLLHTNGQALLYRGRWQQEDQRDLDPALALLKAKTVAIERCELPSARGPRTVIRVMPEQPTPHLYPRAVGIPSKQPLGIQADDNRS.

S-adenosyl-L-methionine contacts are provided by residues Gly-84, Phe-89, 136–137 (VE), and Arg-155. The disordered stretch occupies residues 231 to 254 (HLYPRAVGIPSKQPLGIQADDNRS).

Belongs to the methyltransferase superfamily. RNA methyltransferase RsmG family.

It is found in the cytoplasm. Functionally, specifically methylates the N7 position of a guanine in 16S rRNA. In Synechococcus sp. (strain WH7803), this protein is Ribosomal RNA small subunit methyltransferase G.